Consider the following 55-residue polypeptide: MAKDGPRIIVKMESTAGTGFYYTTTKNRRNTQAKMELRKYDPVAKKHVVFKEKKV.

Belongs to the bacterial ribosomal protein bL33 family.

This Deinococcus deserti (strain DSM 17065 / CIP 109153 / LMG 22923 / VCD115) protein is Large ribosomal subunit protein bL33.